A 198-amino-acid polypeptide reads, in one-letter code: Phycocyanobilin lyase CpcT homolog (198 aa).

Belongs to the CpcT/CpeT biliprotein lyase family.

In terms of biological role, covalently attaches a chromophore to Cys residue(s) of phycobiliproteins. In vitro is not seen to act as a chromophore lyase for ApcA1, ApcA2, ApcB, ApcD, ApcF, CpcB or PecB, the lyase activity is therefore unsure. In Nostoc sp. (strain PCC 7120 / SAG 25.82 / UTEX 2576), this protein is Phycocyanobilin lyase CpcT homolog (cpcT2).